Consider the following 69-residue polypeptide: MPLTVNCPICKAPVEWVPQSAFKPFCSERCKLIDLGDWASEKHVIPVKAEFDPEAFDEFDLDEGDFFKE.

Positions 7, 10, 26, and 30 each coordinate Zn(2+).

Belongs to the DNA gyrase inhibitor YacG family. In terms of assembly, interacts with GyrB. Requires Zn(2+) as cofactor.

In terms of biological role, inhibits all the catalytic activities of DNA gyrase by preventing its interaction with DNA. Acts by binding directly to the C-terminal domain of GyrB, which probably disrupts DNA binding by the gyrase. The sequence is that of DNA gyrase inhibitor YacG from Shewanella baltica (strain OS195).